Here is a 202-residue protein sequence, read N- to C-terminus: CASP-like protein 2B1 (202 aa).

At 1 to 29 (MSYLGVGVSPGNVPVYHGTNLKVVDRRVR) the chain is on the cytoplasmic side. The helical transmembrane segment at 30-50 (LAELVLRCVICGLGILAAVLV) threads the bilayer. Residues 51–72 (GTDTQVKVIFTIQKKAKFTDMK) are Extracellular-facing. Residues 73-93 (ALVFLVIANGIAAAYSLIQGL) form a helical membrane-spanning segment. Over 94–109 (RCVVSMVRGSVLFSKP) the chain is Cytoplasmic. The helical transmembrane segment at 110–130 (LAWAIFSGDQVIAYLTLAAVA) threads the bilayer. The Extracellular portion of the chain corresponds to 131–164 (AAAQSSVFGEFGQPELQWMKICNMYGKFCNQVGE). The chain crosses the membrane as a helical span at residues 165–185 (GIVSAVGVSLSMVILSGISAF). Topologically, residues 186–202 (SLFRLYGGNKGTSGGRW) are cytoplasmic.

This sequence belongs to the Casparian strip membrane proteins (CASP) family. In terms of assembly, homodimer and heterodimers.

It localises to the cell membrane. The sequence is that of CASP-like protein 2B1 from Vitis vinifera (Grape).